Reading from the N-terminus, the 99-residue chain is MARITVEDCLEVVNNRFELVMMASKRARQLANGVQPLIENADASDKPTVMALREIAARRIDNALIDEVEKAERERAEREALEWAAAEVVADEDMSKNDD.

This sequence belongs to the RNA polymerase subunit omega family. The RNAP catalytic core consists of 2 alpha, 1 beta, 1 beta' and 1 omega subunit. When a sigma factor is associated with the core the holoenzyme is formed, which can initiate transcription.

It catalyses the reaction RNA(n) + a ribonucleoside 5'-triphosphate = RNA(n+1) + diphosphate. Functionally, promotes RNA polymerase assembly. Latches the N- and C-terminal regions of the beta' subunit thereby facilitating its interaction with the beta and alpha subunits. This Xanthomonas axonopodis pv. citri (strain 306) protein is DNA-directed RNA polymerase subunit omega.